The sequence spans 234 residues: Lipoprotein-releasing system ATP-binding protein LolD (234 aa).

Residues 7–234 (LLCNNLCKKY…QDELTVTGAL (228 aa)) form the ABC transporter domain. Residue 43 to 50 (GSSGSGKS) coordinates ATP.

The protein belongs to the ABC transporter superfamily. Lipoprotein translocase (TC 3.A.1.125) family. As to quaternary structure, the complex is composed of two ATP-binding proteins (LolD) and two transmembrane proteins (LolC and LolE).

The protein resides in the cell inner membrane. Its function is as follows. Part of the ABC transporter complex LolCDE involved in the translocation of mature outer membrane-directed lipoproteins, from the inner membrane to the periplasmic chaperone, LolA. Responsible for the formation of the LolA-lipoprotein complex in an ATP-dependent manner. The protein is Lipoprotein-releasing system ATP-binding protein LolD of Photorhabdus laumondii subsp. laumondii (strain DSM 15139 / CIP 105565 / TT01) (Photorhabdus luminescens subsp. laumondii).